A 144-amino-acid polypeptide reads, in one-letter code: Cell division protein SepF (144 aa).

The protein belongs to the SepF family. In terms of assembly, homodimer. Interacts with FtsZ.

Its subcellular location is the cytoplasm. Cell division protein that is part of the divisome complex and is recruited early to the Z-ring. Probably stimulates Z-ring formation, perhaps through the cross-linking of FtsZ protofilaments. Its function overlaps with FtsA. The sequence is that of Cell division protein SepF from Oceanobacillus iheyensis (strain DSM 14371 / CIP 107618 / JCM 11309 / KCTC 3954 / HTE831).